A 101-amino-acid polypeptide reads, in one-letter code: MGFKVKVEFLGGLDVISNKVREHSLKVPLEEGEATVKDLIELITKSIIADPKDIPVFIEDDTVRPGILVLINDTDWELEGMEEYVLESGDVFTFTSTLHGG.

Position 101 is a 1-thioglycine (Gly-101). Gly-101 is covalently cross-linked (Glycyl lysine isopeptide (Gly-Lys) (interchain with K-? in acceptor proteins)).

Belongs to the URM1 family. In terms of processing, C-terminal thiocarboxylation occurs in 2 steps, it is first acyl-adenylated (-COAMP) via the hesA/moeB/thiF part of UBA4, then thiocarboxylated (-COSH) via the rhodanese domain of UBA4.

Its subcellular location is the cytoplasm. The protein operates within tRNA modification; 5-methoxycarbonylmethyl-2-thiouridine-tRNA biosynthesis. Its function is as follows. Acts as a sulfur carrier required for 2-thiolation of mcm(5)S(2)U at tRNA wobble positions of cytosolic tRNA(Lys), tRNA(Glu) and tRNA(Gln). Serves as sulfur donor in tRNA 2-thiolation reaction by being thiocarboxylated (-COSH) at its C-terminus by the MOCS3 homolog UBA4. The sulfur is then transferred to tRNA to form 2-thiolation of mcm(5)S(2)U. Prior mcm(5) tRNA modification by the elongator complex is required for 2-thiolation. Also acts as a ubiquitin-like protein (UBL) that is covalently conjugated via an isopeptide bond to lysine residues of target proteins such as AHP1. The thiocarboxylated form serves as substrate for conjugation and oxidative stress specifically induces the formation of UBL-protein conjugates. In Scheffersomyces stipitis (strain ATCC 58785 / CBS 6054 / NBRC 10063 / NRRL Y-11545) (Yeast), this protein is Ubiquitin-related modifier 1.